The following is a 283-amino-acid chain: Phosphatidylglycerol--prolipoprotein diacylglyceryl transferase (283 aa).

Transmembrane regions (helical) follow at residues 20–40 (LGPV…FVAM), 51–71 (GGNP…GIIG), 97–117 (ITNG…AVYF), and 123–143 (GVAF…AQAI). R145 is a binding site for a 1,2-diacyl-sn-glycero-3-phospho-(1'-sn-glycerol). Helical transmembrane passes span 192-212 (VHPT…VLLW) and 255-275 (INVI…FALR).

Belongs to the Lgt family.

It is found in the cell membrane. The enzyme catalyses L-cysteinyl-[prolipoprotein] + a 1,2-diacyl-sn-glycero-3-phospho-(1'-sn-glycerol) = an S-1,2-diacyl-sn-glyceryl-L-cysteinyl-[prolipoprotein] + sn-glycerol 1-phosphate + H(+). Its pathway is protein modification; lipoprotein biosynthesis (diacylglyceryl transfer). Functionally, catalyzes the transfer of the diacylglyceryl group from phosphatidylglycerol to the sulfhydryl group of the N-terminal cysteine of a prolipoprotein, the first step in the formation of mature lipoproteins. In Corynebacterium diphtheriae (strain ATCC 700971 / NCTC 13129 / Biotype gravis), this protein is Phosphatidylglycerol--prolipoprotein diacylglyceryl transferase.